The chain runs to 89 residues: MAISKTEKDNIIKEYATHEGDTGSVEVQVALLTADINNLTDHMKSHKHDHHSYVGLLKKIGHRRNLLRYLENNDINRYRELIKKLGLRR.

The protein belongs to the universal ribosomal protein uS15 family. In terms of assembly, part of the 30S ribosomal subunit. Forms a bridge to the 50S subunit in the 70S ribosome, contacting the 23S rRNA.

Functionally, one of the primary rRNA binding proteins, it binds directly to 16S rRNA where it helps nucleate assembly of the platform of the 30S subunit by binding and bridging several RNA helices of the 16S rRNA. In terms of biological role, forms an intersubunit bridge (bridge B4) with the 23S rRNA of the 50S subunit in the ribosome. In Lactobacillus helveticus (strain DPC 4571), this protein is Small ribosomal subunit protein uS15.